The primary structure comprises 71 residues: MIVHNICHPPRPHCQLKLLCLLNAKAVSYFMVGTDDKIEAEVWVFADESVAVARPGQPVKAYHTIQSVCFH.

In Pseudomonas aeruginosa (Bacteriophage Pf3), this protein is 7.9 kDa protein.